The chain runs to 477 residues: Bifunctional protein HldE (477 aa).

Positions 1 to 318 (MKVTLPEFER…ENAVRGRADT (318 aa)) are ribokinase. The residue at position 179 (lysine 179) is an N6-acetyllysine. 195 to 198 (NLSE) is a binding site for ATP. Aspartate 264 is a catalytic residue. A cytidylyltransferase region spans residues 344 to 477 (MTNGVFDILH…IKKIQQDKKG (134 aa)).

This sequence in the N-terminal section; belongs to the carbohydrate kinase PfkB family. It in the C-terminal section; belongs to the cytidylyltransferase family. As to quaternary structure, homodimer.

It carries out the reaction D-glycero-beta-D-manno-heptose 7-phosphate + ATP = D-glycero-beta-D-manno-heptose 1,7-bisphosphate + ADP + H(+). The enzyme catalyses D-glycero-beta-D-manno-heptose 1-phosphate + ATP + H(+) = ADP-D-glycero-beta-D-manno-heptose + diphosphate. The protein operates within nucleotide-sugar biosynthesis; ADP-L-glycero-beta-D-manno-heptose biosynthesis; ADP-L-glycero-beta-D-manno-heptose from D-glycero-beta-D-manno-heptose 7-phosphate: step 1/4. Its pathway is nucleotide-sugar biosynthesis; ADP-L-glycero-beta-D-manno-heptose biosynthesis; ADP-L-glycero-beta-D-manno-heptose from D-glycero-beta-D-manno-heptose 7-phosphate: step 3/4. In terms of biological role, catalyzes the phosphorylation of D-glycero-D-manno-heptose 7-phosphate at the C-1 position to selectively form D-glycero-beta-D-manno-heptose-1,7-bisphosphate. Its function is as follows. Catalyzes the ADP transfer from ATP to D-glycero-beta-D-manno-heptose 1-phosphate, yielding ADP-D-glycero-beta-D-manno-heptose. This is Bifunctional protein HldE from Escherichia fergusonii (strain ATCC 35469 / DSM 13698 / CCUG 18766 / IAM 14443 / JCM 21226 / LMG 7866 / NBRC 102419 / NCTC 12128 / CDC 0568-73).